A 256-amino-acid chain; its full sequence is RNA polymerase sigma factor SigI1 (256 aa).

A Polymerase core binding motif is present at residues 67–80 (DEFSIALSAFNEAI). Residues 205–224 (RNELKKKAKVHGRTIGNNRK) constitute a DNA-binding region (H-T-H motif).

It belongs to the sigma-70 factor family. SigI subfamily. In terms of assembly, interacts with RsgI1.

The protein localises to the cytoplasm. Its activity is regulated as follows. Negatively regulated by the anti-sigma-I factor RsgI1. Binding of the polysaccharide substrate to RsgI1 may lead to the release and activation of SigI1. In terms of biological role, sigma factors are initiation factors that promote the attachment of RNA polymerase to specific initiation sites and are then released. This sigma factor is involved in regulation of cellulosomal genes via an external polysaccharide-sensing mechanism. SigI1 promotes transcription from sigI1 and celS promoters. In Acetivibrio thermocellus (strain ATCC 27405 / DSM 1237 / JCM 9322 / NBRC 103400 / NCIMB 10682 / NRRL B-4536 / VPI 7372) (Clostridium thermocellum), this protein is RNA polymerase sigma factor SigI1.